A 160-amino-acid chain; its full sequence is MAKQKKHPTGTIAQNKKARHDYFIEHKFEAGLVLSGWEVKSLRAGKAHLTDSYVLLKDGEAWLFGSHITPLTTASTHVIADPIRSRKLLLNKRELERVEAAVAQKGYTCVALALYWSKHLIKCEIALGKGKKEFDKRDTVRERDSNRELQRAVRNKGKED.

Residues 136-160 (KRDTVRERDSNRELQRAVRNKGKED) are disordered.

The protein belongs to the SmpB family.

It is found in the cytoplasm. Its function is as follows. Required for rescue of stalled ribosomes mediated by trans-translation. Binds to transfer-messenger RNA (tmRNA), required for stable association of tmRNA with ribosomes. tmRNA and SmpB together mimic tRNA shape, replacing the anticodon stem-loop with SmpB. tmRNA is encoded by the ssrA gene; the 2 termini fold to resemble tRNA(Ala) and it encodes a 'tag peptide', a short internal open reading frame. During trans-translation Ala-aminoacylated tmRNA acts like a tRNA, entering the A-site of stalled ribosomes, displacing the stalled mRNA. The ribosome then switches to translate the ORF on the tmRNA; the nascent peptide is terminated with the 'tag peptide' encoded by the tmRNA and targeted for degradation. The ribosome is freed to recommence translation, which seems to be the essential function of trans-translation. The sequence is that of SsrA-binding protein from Pseudomonas putida (strain W619).